A 261-amino-acid polypeptide reads, in one-letter code: Carnitinyl-CoA dehydratase (261 aa).

E111 (nucleophile) is an active-site residue. E131 serves as the catalytic Proton acceptor.

It belongs to the enoyl-CoA hydratase/isomerase family.

The catalysed reaction is (R)-carnitinyl-CoA = crotonobetainyl-CoA + H2O. Its pathway is amine and polyamine metabolism; carnitine metabolism. Catalyzes the reversible dehydration of L-carnitinyl-CoA to crotonobetainyl-CoA. The chain is Carnitinyl-CoA dehydratase from Escherichia coli O6:K15:H31 (strain 536 / UPEC).